Here is a 201-residue protein sequence, read N- to C-terminus: Natural cytotoxicity triggering receptor 3 (201 aa).

Residues 1–18 (MAWMLLLILIMVHPGSCA) form the signal peptide. Residues 19-126 (LWVSQPPEIR…VGTGNGTRLV (108 aa)) enclose the Ig-like domain. The Extracellular portion of the chain corresponds to 19-135 (LWVSQPPEIR…VVEKEHPQLG (117 aa)). Residues cysteine 39 and cysteine 108 are joined by a disulfide bond. 2 N-linked (GlcNAc...) asparagine glycosylation sites follow: asparagine 42 and asparagine 121. The chain crosses the membrane as a helical span at residues 136–156 (AGTVLLLRAGFYAVSFLSVAV). Over 157–201 (GSTVYYQGKCLTWKGPRRQLPAVVPAPLPPPCGSSAQLLPPVPGG) the chain is Cytoplasmic.

Belongs to the natural cytotoxicity receptor (NCR) family. As to quaternary structure, homodimer in the unliganted form. Interacts with CD3Z. Interacts with and is activated by binding to NCR3LG1. Interacts with and is activated by binding to BAG6. Interacts with and is inhibited by binding to LGALS3.

It is found in the cell membrane. In terms of biological role, cell membrane receptor of natural killer/NK cells that is activated by binding of extracellular ligands including BAG6 and NCR3LG1. Stimulates NK cells cytotoxicity toward neighboring cells producing these ligands. It controls, for instance, NK cells cytotoxicity against tumor cells. Engagement of NCR3 by BAG6 also promotes myeloid dendritic cells (DC) maturation, both through killing DCs that did not acquire a mature phenotype, and inducing the release by NK cells of TNFA and IFNG that promote DC maturation. The sequence is that of Natural cytotoxicity triggering receptor 3 (NCR3) from Pan troglodytes (Chimpanzee).